Reading from the N-terminus, the 539-residue chain is Beta-apo-4'-carotenal oxygenase (539 aa).

Residues Glu228 and Cys262 contribute to the active site.

The protein belongs to the aldehyde dehydrogenase family.

It catalyses the reaction 4'-apo-beta-carotenal + NAD(+) + H2O = neurosporaxanthin + NADH + 2 H(+). Its function is as follows. Beta-apo-4'-carotenal oxygenase involved in the last step of synthesis of neurosporaxanthin, a carboxylic apocarotenoid acting as an essential protective pigments and leading to orange pigmentation. Converts the aldehyde beta-apo-4'-carotenal into neurosporaxanthin. Is also able to use shorter apocarotenals as substrates (such as beta-apo-8'-carotenal (C30), beta-apo-10'-carotenal (C27), or the acyclic apocarotenal apo-8'-lycopenal (C30)), indicating wide substrate specificity. Neurosporaxanthin is synthesized from geranyl-geranyl pyrophosphate (GGPP) through several enzymatic activities. Phytoene synthase activity performed by the bifunctional enzyme carAR first produces phytoene from geranyl-geranyl pyrophosphate (GGPP). The phytoene dehydrogenase carB then introduces 4 desaturations to lead to lycopene which is substrate of the carotene cyclase activity of carAR that leads to the production of gamma-carotene. CarB then performs a 5th desaturation reaction to yield torulene. Torulene is the substrate of the dioxidase carT that breaks the molecule, removing five carbon atoms to yield beta-apo-4'-carotenal, whereas the aldehyde dehydrogenase carD mediates the last step by converting beta-apo-4'-carotenal into neurosporaxanthin. The polypeptide is Beta-apo-4'-carotenal oxygenase (Gibberella fujikuroi (strain CBS 195.34 / IMI 58289 / NRRL A-6831) (Bakanae and foot rot disease fungus)).